The following is a 513-amino-acid chain: L-threonine dehydratase biosynthetic IlvA (513 aa).

At lysine 63 the chain carries N6-(pyridoxal phosphate)lysine. Pyridoxal 5'-phosphate is bound by residues asparagine 90, 189-193 (GGGGL), and serine 316. 2 ACT-like domains span residues 340–411 (ALLA…DMSD) and 433–504 (RLYT…DVTK).

Belongs to the serine/threonine dehydratase family. As to quaternary structure, homotetramer. Pyridoxal 5'-phosphate serves as cofactor.

The enzyme catalyses L-threonine = 2-oxobutanoate + NH4(+). It functions in the pathway amino-acid biosynthesis; L-isoleucine biosynthesis; 2-oxobutanoate from L-threonine: step 1/1. In terms of biological role, catalyzes the anaerobic formation of alpha-ketobutyrate and ammonia from threonine in a two-step reaction. The first step involved a dehydration of threonine and a production of enamine intermediates (aminocrotonate), which tautomerizes to its imine form (iminobutyrate). Both intermediates are unstable and short-lived. The second step is the nonenzymatic hydrolysis of the enamine/imine intermediates to form 2-ketobutyrate and free ammonia. In the low water environment of the cell, the second step is accelerated by RidA. This Haemophilus influenzae (strain ATCC 51907 / DSM 11121 / KW20 / Rd) protein is L-threonine dehydratase biosynthetic IlvA (ilvA).